The following is a 338-amino-acid chain: Tryptophan--tRNA ligase (338 aa).

Residues 11–13 (QPS) and 19–20 (GN) each bind ATP. The 'HIGH' region motif lies at 12-20 (PSGELSIGN). Asp-135 is a binding site for L-tryptophan. ATP is bound by residues 147 to 149 (GSD), Val-189, and 198 to 202 (KMSKS). The 'KMSKS' region signature appears at 198–202 (KMSKS).

Belongs to the class-I aminoacyl-tRNA synthetase family. As to quaternary structure, homodimer.

It is found in the cytoplasm. The enzyme catalyses tRNA(Trp) + L-tryptophan + ATP = L-tryptophyl-tRNA(Trp) + AMP + diphosphate + H(+). Its function is as follows. Catalyzes the attachment of tryptophan to tRNA(Trp). This chain is Tryptophan--tRNA ligase, found in Aliivibrio fischeri (strain ATCC 700601 / ES114) (Vibrio fischeri).